The primary structure comprises 402 residues: NAD-dependent protein deacetylase sirtuin-7 (402 aa).

Disordered regions lie at residues 1-25 (MAAG…REEQ) and 59-78 (VTEL…RQEE). Basic and acidic residues predominate over residues 9–25 (RSERKAAERVRRLREEQ). Residues 83–330 (PEELRRKVRE…RLLMDELGLE (248 aa)) enclose the Deacetylase sirtuin-type domain. Residues 108–127 (GAGI…NGVW) and 168–171 (QNCD) each bind NAD(+). His-188 functions as the Proton acceptor in the catalytic mechanism. Positions 196, 199, 226, and 229 each coordinate Zn(2+). NAD(+)-binding positions include 269–271 (GSS), 298–300 (NLQ), and Cys-316. A disordered region spans residues 355-385 (SHSRKSLCRSREEPPPGDQSAPLASATPILG). Arg-390 carries the post-translational modification Asymmetric dimethylarginine; alternate. The residue at position 390 (Arg-390) is an Omega-N-methylarginine; alternate.

Belongs to the sirtuin family. Class IV subfamily. As to quaternary structure, interacts with UBTF and the RNA polymerase I complex. Interacts with components of the B-WICH complex, such as MYBBP1A, SMARCA5/SNF2H and BAZ1B/WSTF. Interacts with ELK4, leading to stabilization at target promoters for H3K18Ac deacetylation. Interacts with histone H2A and/or histone H2B. Interacts with DNMT1. Interacts with SIRT1. It depends on Zn(2+) as a cofactor. Post-translationally, phosphorylated during mitosis. In terms of processing, methylation at Arg-390 by PRMT6 inhibits the H3K18Ac histone deacetylase activity, promoting mitochondria biogenesis and maintaining mitochondria respiration. Ubiquitinated via 'Lys-63'-linked ubiquitin chains. Deubiquitinated by USP7, inhibiting the H3K18Ac histone deacetylase activity and regulating gluconeogenesis. Ubiquitinated by E3 ubiquitin-protein ligase complex containing FBXO7; leading to proteasomal degradation.

The protein resides in the nucleus. It localises to the nucleolus. The protein localises to the nucleoplasm. Its subcellular location is the chromosome. It is found in the cytoplasm. The enzyme catalyses N(6)-acetyl-L-lysyl-[protein] + NAD(+) + H2O = 2''-O-acetyl-ADP-D-ribose + nicotinamide + L-lysyl-[protein]. It carries out the reaction N(6)-glutaryl-L-lysyl-[protein] + NAD(+) + H2O = 2''-O-glutaryl-ADP-D-ribose + nicotinamide + L-lysyl-[protein]. The catalysed reaction is N(6)-succinyl-L-lysyl-[protein] + NAD(+) + H2O = 2''-O-succinyl-ADP-D-ribose + nicotinamide + L-lysyl-[protein]. It catalyses the reaction N(6)-propanoyl-L-lysyl-[protein] + NAD(+) + H2O = 3''-O-propanoyl-ADP-D-ribose + nicotinamide + L-lysyl-[protein]. The enzyme catalyses N(6)-decanoyl-L-lysyl-[protein] + NAD(+) + H2O = 2''-O-decanoyl-ADP-D-ribose + nicotinamide + L-lysyl-[protein]. Its activity is regulated as follows. NAD-dependent protein-lysine deacetylase and deacylase activities are activated by nucleic acids. Histone deacetylase activity is activated by DNA. Protein-lysine deacylase activity is activated by RNA. H3K18Ac histone deacetylase activity is inhibited by methylation at Arg-390. H3K18Ac histone deacetylase activity is inhibited by deubiquitination by USP7. Functionally, NAD-dependent protein-lysine deacylase that can act both as a deacetylase or deacylase (desuccinylase, depropionylase, deglutarylase and dedecanoylase), depending on the context. Specifically mediates deacetylation of histone H3 at 'Lys-18' (H3K18Ac). In contrast to other histone deacetylases, displays strong preference for a specific histone mark, H3K18Ac, directly linked to control of gene expression. H3K18Ac is mainly present around the transcription start site of genes and has been linked to activation of nuclear hormone receptors; SIRT7 thereby acts as a transcription repressor. Moreover, H3K18 hypoacetylation has been reported as a marker of malignancy in various cancers and seems to maintain the transformed phenotype of cancer cells. Also able to mediate deacetylation of histone H3 at 'Lys-36' (H3K36Ac) in the context of nucleosomes. Also mediates deacetylation of non-histone proteins, such as ATM, CDK9, DDX21, DDB1, FBL, FKBP5/FKBP51, GABPB1, RAN, RRP9/U3-55K and POLR1E/PAF53. Enriched in nucleolus where it stimulates transcription activity of the RNA polymerase I complex. Acts by mediating the deacetylation of the RNA polymerase I subunit POLR1E/PAF53, thereby promoting the association of RNA polymerase I with the rDNA promoter region and coding region. In response to metabolic stress, SIRT7 is released from nucleoli leading to hyperacetylation of POLR1E/PAF53 and decreased RNA polymerase I transcription. Required to restore the transcription of ribosomal RNA (rRNA) at the exit from mitosis. Promotes pre-ribosomal RNA (pre-rRNA) cleavage at the 5'-terminal processing site by mediating deacetylation of RRP9/U3-55K, a core subunit of the U3 snoRNP complex. Mediates 'Lys-37' deacetylation of Ran, thereby regulating the nuclear export of NF-kappa-B subunit RELA/p65. Acts as a regulator of DNA damage repair by mediating deacetylation of ATM during the late stages of DNA damage response, promoting ATM dephosphorylation and deactivation. Suppresses the activity of the DCX (DDB1-CUL4-X-box) E3 ubiquitin-protein ligase complexes by mediating deacetylation of DDB1, which prevents the interaction between DDB1 and CUL4 (CUL4A or CUL4B). Activates RNA polymerase II transcription by mediating deacetylation of CDK9, thereby promoting 'Ser-2' phosphorylation of the C-terminal domain (CTD) of RNA polymerase II. Deacetylates FBL, promoting histone-glutamine methyltransferase activity of FBL. Acts as a regulator of mitochondrial function by catalyzing deacetylation of GABPB1. Regulates Akt/AKT1 activity by mediating deacetylation of FKBP5/FKBP51. Required to prevent R-loop-associated DNA damage and transcription-associated genomic instability by mediating deacetylation and subsequent activation of DDX21, thereby overcoming R-loop-mediated stalling of RNA polymerases. In addition to protein deacetylase activity, also acts as a protein-lysine deacylase. Acts as a protein depropionylase by mediating depropionylation of Osterix (SP7), thereby regulating bone formation by osteoblasts. Acts as a histone deglutarylase by mediating deglutarylation of histone H4 on 'Lys-91' (H4K91glu); a mark that destabilizes nucleosomes by promoting dissociation of the H2A-H2B dimers from nucleosomes. Acts as a histone desuccinylase: in response to DNA damage, recruited to DNA double-strand breaks (DSBs) and catalyzes desuccinylation of histone H3 on 'Lys-122' (H3K122succ), thereby promoting chromatin condensation and DSB repair. Also promotes DSB repair by promoting H3K18Ac deacetylation, regulating non-homologous end joining (NHEJ). Along with its role in DNA repair, required for chromosome synapsis during prophase I of female meiosis by catalyzing H3K18Ac deacetylation. Involved in transcriptional repression of LINE-1 retrotransposon via H3K18Ac deacetylation, and promotes their association with the nuclear lamina. Required to stabilize ribosomal DNA (rDNA) heterochromatin and prevent cellular senescence induced by rDNA instability. Acts as a negative regulator of SIRT1 by preventing autodeacetylation of SIRT1, restricting SIRT1 deacetylase activity. This is NAD-dependent protein deacetylase sirtuin-7 from Rattus norvegicus (Rat).